We begin with the raw amino-acid sequence, 334 residues long: Protein POLAR-like 1 (334 aa).

The segment covering 53–63 (IRTSSEDDHHR) has biased composition (basic and acidic residues). A disordered region spans residues 53–74 (IRTSSEDDHHRVGQFSDSPPPT). Residues 273–300 (ETRQQEEIKELEIALDDAKQRLHLKETE) adopt a coiled-coil conformation.

It is found in the cytoplasm. The protein localises to the cell cortex. In terms of biological role, acts as a stomatal lineage scaffold which regulates subcellular localization and transient polarization of kinases (e.g. ASK7/BIN2 and ASK3/SK12) involved in asymmetric cell division (ACD) in a BASL-dependent manner. The sequence is that of Protein POLAR-like 1 from Arabidopsis thaliana (Mouse-ear cress).